The chain runs to 155 residues: MPTPKKGPRLASSPAHERLMLANMATSLFQNGRITTTLPKAKRLRPLAERLITLAKRGDLHNRRRVMRVIRNKSVVHKLFTEIAEQMEQREGGYTRIVKIAPRRGDAAPAAIIELVTEPVSPKQAVVKEAEAATKVAAAEAPEAAAEEATAENAE.

Belongs to the bacterial ribosomal protein bL17 family. In terms of assembly, part of the 50S ribosomal subunit. Contacts protein L32.

In Bifidobacterium adolescentis (strain ATCC 15703 / DSM 20083 / NCTC 11814 / E194a), this protein is Large ribosomal subunit protein bL17.